The chain runs to 150 residues: UPF0208 membrane protein VC_1099 (150 aa).

2 helical membrane passes run 42–62 and 70–90; these read FAIK…MVFA and AIVV…WLGH.

It belongs to the UPF0208 family.

Its subcellular location is the cell inner membrane. The chain is UPF0208 membrane protein VC_1099 from Vibrio cholerae serotype O1 (strain ATCC 39315 / El Tor Inaba N16961).